Here is a 729-residue protein sequence, read N- to C-terminus: Phosphoribosylformylglycinamidine synthase subunit PurL (729 aa).

The active site involves H54. ATP is bound by residues Y57 and K96. E98 lines the Mg(2+) pocket. Substrate contacts are provided by residues 99–102 and R121; that span reads SHNH. H100 acts as the Proton acceptor in catalysis. Mg(2+) is bound at residue D122. Residue Q245 coordinates substrate. D273 serves as a coordination point for Mg(2+). 317–319 is a substrate binding site; that stretch reads ETQ. Residues D495 and G532 each coordinate ATP. N533 contributes to the Mg(2+) binding site. S535 contacts substrate.

It belongs to the FGAMS family. Monomer. Part of the FGAM synthase complex composed of 1 PurL, 1 PurQ and 2 PurS subunits.

It localises to the cytoplasm. The enzyme catalyses N(2)-formyl-N(1)-(5-phospho-beta-D-ribosyl)glycinamide + L-glutamine + ATP + H2O = 2-formamido-N(1)-(5-O-phospho-beta-D-ribosyl)acetamidine + L-glutamate + ADP + phosphate + H(+). It functions in the pathway purine metabolism; IMP biosynthesis via de novo pathway; 5-amino-1-(5-phospho-D-ribosyl)imidazole from N(2)-formyl-N(1)-(5-phospho-D-ribosyl)glycinamide: step 1/2. Its function is as follows. Part of the phosphoribosylformylglycinamidine synthase complex involved in the purines biosynthetic pathway. Catalyzes the ATP-dependent conversion of formylglycinamide ribonucleotide (FGAR) and glutamine to yield formylglycinamidine ribonucleotide (FGAM) and glutamate. The FGAM synthase complex is composed of three subunits. PurQ produces an ammonia molecule by converting glutamine to glutamate. PurL transfers the ammonia molecule to FGAR to form FGAM in an ATP-dependent manner. PurS interacts with PurQ and PurL and is thought to assist in the transfer of the ammonia molecule from PurQ to PurL. This chain is Phosphoribosylformylglycinamidine synthase subunit PurL, found in Staphylococcus aureus (strain bovine RF122 / ET3-1).